The sequence spans 190 residues: uncharacterized protein (190 aa).

This sequence belongs to the Iojap/RsfS family.

This is an uncharacterized protein from Caenorhabditis elegans.